Consider the following 481-residue polypeptide: Drebrin-like protein (481 aa).

The region spanning 3 to 131 is the ADF-H domain; the sequence is SLDISDPDIT…DEKAITAALN (129 aa). The span at 217–227 shows a compositional bias: basic and acidic residues; that stretch reads YWKQQQAEKQK. Residues 217–423 form a disordered region; it reads YWKQQQAEKQ…PAEEQYDQSG (207 aa). Over residues 228–237 the composition is skewed to low complexity; the sequence is QQQQQQQQQA. The span at 248 to 261 shows a compositional bias: polar residues; the sequence is TVGNKFQEQVSKPT. Residues 291 to 300 are compositionally biased toward pro residues; the sequence is PPAPSRPAAP. The segment covering 325-335 has biased composition (acidic residues); the sequence is QYEEPQYEEEQ. Over residues 336–413 the composition is skewed to low complexity; the sequence is QQQYEEQPTE…YQEEQQQYEQ (78 aa). The region spanning 422-481 is the SH3 domain; that stretch reads SGYLQAKALYDYNGENDGDLSFREGDIITILDQSDPDGWWQGSLPTGEQGFFPSNFVQQL.

This sequence belongs to the ABP1 family.

It localises to the cytoplasm. Its subcellular location is the cytoskeleton. The protein resides in the cell projection. The protein localises to the pseudopodium. Actin-binding adapter protein. Binds to F-actin but is not involved in actin polymerization, capping or bundling. Does not bind G-actin. Controls pseudopodium number and motility in early stages of chemotactic aggregation. In Dictyostelium discoideum (Social amoeba), this protein is Drebrin-like protein (abpE-1).